Reading from the N-terminus, the 103-residue chain is Large ribosomal subunit protein bL21 (103 aa).

The protein belongs to the bacterial ribosomal protein bL21 family. In terms of assembly, part of the 50S ribosomal subunit. Contacts protein L20.

Functionally, this protein binds to 23S rRNA in the presence of protein L20. The polypeptide is Large ribosomal subunit protein bL21 (Pseudomonas syringae pv. syringae (strain B728a)).